A 662-amino-acid chain; its full sequence is FAST kinase domain-containing protein 3, mitochondrial (662 aa).

The RAP domain occupies 591-649 (IALCIDGPKRFCSNSKHLLGKEAIKQRHLQLLGYQVVQIPYHEIGMLKSRRELVEYLQR).

Belongs to the FAST kinase family. In terms of tissue distribution, expression detected in spleen, thymus, testis, ovary, colon, heart, smooth muscle, kidney, brain, lung, liver and white adipose tissue with highest expression in liver and thyroid.

The protein localises to the mitochondrion. Functionally, required for normal mitochondrial respiration. Increases steady-state levels and half-lives of a subset of mature mitochondrial mRNAs MT-ND2, MT-ND3, MT-CYTB, MT-CO2, and MT-ATP8/6. Promotes MT-CO1 mRNA translation and increases mitochondrial complex IV assembly and activity. The chain is FAST kinase domain-containing protein 3, mitochondrial (FASTKD3) from Homo sapiens (Human).